A 249-amino-acid polypeptide reads, in one-letter code: uncharacterized protein (249 aa).

The a divalent metal cation site is built by His-10, His-12, Glu-95, His-129, His-150, and Asp-198.

Belongs to the metallo-dependent hydrolases superfamily. TatD-type hydrolase family. A divalent metal cation serves as cofactor.

This is an uncharacterized protein from Methanocaldococcus jannaschii (strain ATCC 43067 / DSM 2661 / JAL-1 / JCM 10045 / NBRC 100440) (Methanococcus jannaschii).